A 524-amino-acid polypeptide reads, in one-letter code: DNA damage-binding protein CMR1 (524 aa).

The segment at 35-79 is disordered; it reads EKIIPKPAPPKPKRASAPRAKREPVKRETARPTRQSSRLAGLDAD. Positions 54 to 65 are enriched in basic and acidic residues; the sequence is AKREPVKRETAR. 7 WD repeats span residues 184–225, 245–285, 295–332, 336–376, 385–425, 447–490, and 493–524; these read LVPQ…VKAE, THSR…STEA, LPIS…STAE, LTDQ…GKGD, THDS…KWTA, GRWV…LAQL, and DGIT…CLWM.

The protein belongs to the WD repeat DDB2/WDR76 family.

Its function is as follows. DNA-binding protein that binds to both single- and double-stranded DNA. Binds preferentially to UV-damaged DNA. May be involved in DNA-metabolic processes. In Chaetomium globosum (strain ATCC 6205 / CBS 148.51 / DSM 1962 / NBRC 6347 / NRRL 1970) (Soil fungus), this protein is DNA damage-binding protein CMR1.